A 676-amino-acid polypeptide reads, in one-letter code: Symportin 1 (676 aa).

The segment covering 1-10 (MGKTRRNRVR) has biased composition (basic residues). Residues 1–28 (MGKTRRNRVRNRTDPIAKPVKPPTDPEL) form a disordered region. An ARM 1 repeat occupies 183-216 (TILRLLFRLISADIAPQDIYEEAISCLTTLSEDN). The segment at 325–385 (KGNQGSRESP…EDDEDDDDDS (61 aa)) is disordered. 2 stretches are compositionally biased toward acidic residues: residues 338–354 (ADEE…DAMD) and 363–385 (EDQE…DDDS). One copy of the ARM 2 repeat lies at 420-453 (TAVPQLIRLSNLPIDSDESLTIQSHALSALNNIS).

The protein belongs to the nuclear import and ribosome assembly adapter family. As to quaternary structure, component of a hexameric 5S RNP precursor complex, composed of 5S RNA, RRS1, RPF2, RPL5, RPL11 and SYO1; this complex acts as a precursor for ribosome assembly.

Its function is as follows. Involved in ribosomal large subunit assembly. In Chaetomium thermophilum (strain DSM 1495 / CBS 144.50 / IMI 039719) (Thermochaetoides thermophila), this protein is Symportin 1.